The primary structure comprises 159 residues: Eukaryotic translation initiation factor 5A-1 (159 aa).

Residues 1 to 12 (MSDEEHHFESKA) are compositionally biased toward basic and acidic residues. The disordered stretch occupies residues 1-23 (MSDEEHHFESKADAGASKTYPQQ). A Hypusine modification is found at K52.

This sequence belongs to the eIF-5A family. Lys-52 undergoes hypusination, a unique post-translational modification that consists in the addition of a butylamino group from spermidine to lysine side chain, leading to the formation of the unusual amino acid hypusine. eIF-5As are the only known proteins to undergo this modification, which is essential for their function.

Functionally, translation factor that promotes translation elongation and termination, particularly upon ribosome stalling at specific amino acid sequence contexts. Binds between the exit (E) and peptidyl (P) site of the ribosome and promotes rescue of stalled ribosome: specifically required for efficient translation of polyproline-containing peptides as well as other motifs that stall the ribosome. Acts as a ribosome quality control (RQC) cofactor by joining the RQC complex to facilitate peptidyl transfer during CAT tailing step. The polypeptide is Eukaryotic translation initiation factor 5A-1 (EIF-5A1) (Nicotiana plumbaginifolia (Leadwort-leaved tobacco)).